A 217-amino-acid chain; its full sequence is Peptide methionine sulfoxide reductase MsrA 1 (217 aa).

Residue Cys-54 is part of the active site.

It belongs to the MsrA Met sulfoxide reductase family.

It catalyses the reaction L-methionyl-[protein] + [thioredoxin]-disulfide + H2O = L-methionyl-(S)-S-oxide-[protein] + [thioredoxin]-dithiol. It carries out the reaction [thioredoxin]-disulfide + L-methionine + H2O = L-methionine (S)-S-oxide + [thioredoxin]-dithiol. Has an important function as a repair enzyme for proteins that have been inactivated by oxidation. Catalyzes the reversible oxidation-reduction of methionine sulfoxide in proteins to methionine. The protein is Peptide methionine sulfoxide reductase MsrA 1 (msrA1) of Caulobacter vibrioides (strain ATCC 19089 / CIP 103742 / CB 15) (Caulobacter crescentus).